The sequence spans 143 residues: Competence protein ComGD (143 aa).

A propeptide spanning residues 1–10 (MNIKLNEEKG) is cleaved from the precursor. Phenylalanine 11 carries the N-methylphenylalanine modification. A helical membrane pass occupies residues 11-31 (FTLLESLLVLSLASILLVAVF).

The transformation pili are flexible filaments, consisting mainly of the major pilin ComGC and smaller amounts of the minor pilins, including at least ComGD, ComGF and ComGG. Interacts with ComGF. Interacts with ComGG. Post-translationally, processing of ComGD in competent cells requires ComC.

It is found in the cell membrane. Its subcellular location is the cell surface. Functionally, required for formation of the type IV-like pilus (T4P) that plays a role in transformation. Transformation pili are dynamically extended and retracted, perhaps thereby promoting DNA uptake and transformation. Required for transformation and DNA binding. This chain is Competence protein ComGD (comGD), found in Bacillus subtilis (strain 168).